The sequence spans 445 residues: Tryptamine benzoyltransferase 1 (445 aa).

Active-site proton acceptor residues include histidine 150 and aspartate 382.

Belongs to the plant acyltransferase family.

Hydroxycinnamoyl transferase that catalyzes the transfer of an acyl from benzoyl-CoA to tryptamine, to produce benzoyl tryptamine. Serotonin and tyramine serve as acyl acceptors in vitro. Can use p-coumaroyl-CoA, and to a lesser extent caffeoyl-CoA, as acyl donors. The chain is Tryptamine benzoyltransferase 1 from Oryza sativa subsp. japonica (Rice).